We begin with the raw amino-acid sequence, 90 residues long: Small ribosomal subunit protein bS20 (90 aa).

The protein belongs to the bacterial ribosomal protein bS20 family.

In terms of biological role, binds directly to 16S ribosomal RNA. The polypeptide is Small ribosomal subunit protein bS20 (Fusobacterium nucleatum subsp. nucleatum (strain ATCC 25586 / DSM 15643 / BCRC 10681 / CIP 101130 / JCM 8532 / KCTC 2640 / LMG 13131 / VPI 4355)).